We begin with the raw amino-acid sequence, 118 residues long: Large ribosomal subunit protein bL19 (118 aa).

It belongs to the bacterial ribosomal protein bL19 family.

In terms of biological role, this protein is located at the 30S-50S ribosomal subunit interface and may play a role in the structure and function of the aminoacyl-tRNA binding site. The protein is Large ribosomal subunit protein bL19 of Campylobacter lari (strain RM2100 / D67 / ATCC BAA-1060).